Reading from the N-terminus, the 370-residue chain is Chaperone protein DnaJ (370 aa).

In terms of domain architecture, J spans 6–70 (DYYEVLGVQR…EKRSMYDRFG (65 aa)). A CR-type zinc finger spans residues 128–208 (GVEKTIEYRR…CRGEGRIRQT (81 aa)). 8 residues coordinate Zn(2+): cysteine 141, cysteine 144, cysteine 158, cysteine 161, cysteine 182, cysteine 185, cysteine 196, and cysteine 199. CXXCXGXG motif repeat units lie at residues 141 to 148 (CPACRGSG), 158 to 165 (CPKCGGLG), 182 to 189 (CDMCRGEG), and 196 to 203 (CRECRGEG).

It belongs to the DnaJ family. Homodimer. The cofactor is Zn(2+).

It is found in the cytoplasm. Functionally, participates actively in the response to hyperosmotic and heat shock by preventing the aggregation of stress-denatured proteins and by disaggregating proteins, also in an autonomous, DnaK-independent fashion. Unfolded proteins bind initially to DnaJ; upon interaction with the DnaJ-bound protein, DnaK hydrolyzes its bound ATP, resulting in the formation of a stable complex. GrpE releases ADP from DnaK; ATP binding to DnaK triggers the release of the substrate protein, thus completing the reaction cycle. Several rounds of ATP-dependent interactions between DnaJ, DnaK and GrpE are required for fully efficient folding. Also involved, together with DnaK and GrpE, in the DNA replication of plasmids through activation of initiation proteins. The sequence is that of Chaperone protein DnaJ from Roseiflexus castenholzii (strain DSM 13941 / HLO8).